We begin with the raw amino-acid sequence, 423 residues long: p-aminobenzoyl-glutamate hydrolase subunit A homolog (423 aa).

This sequence belongs to the peptidase M20 family. It depends on Mn(2+) as a cofactor.

Functionally, catalyzes the cleavage of p-aminobenzoyl-glutamate (PABA-GLU) to form p-aminobenzoate (PABA) and glutamate. This Haemophilus influenzae (strain ATCC 51907 / DSM 11121 / KW20 / Rd) protein is p-aminobenzoyl-glutamate hydrolase subunit A homolog (abgA).